Here is a 187-residue protein sequence, read N- to C-terminus: Dihydrofolate reductase (187 aa).

Residues 4–185 (PLNCIVAVSQ…IKYKFEVYEK (182 aa)) form the DHFR domain. The involved in methotrexate binding stretch occupies residues 8–37 (IVAVSQNMGIGKNGDFPWPMLRNEFKYFQR). NADP(+) contacts are provided by residues A10 and 16-22 (GIGKNGD). 31 to 36 (EFKYFQ) contacts substrate. Residue K33 is modified to N6-acetyllysine; alternate. Residue K33 is modified to N6-succinyllysine; alternate. NADP(+) is bound at residue 55-57 (RKT). The segment at 60-70 (SIPEKNRPLKD) is involved in methotrexate binding. Position 71 (R71) interacts with substrate. NADP(+)-binding positions include 77–79 (SRE) and 117–124 (GGSSVYKE). T137 contacts methotrexate.

This sequence belongs to the dihydrofolate reductase family. As to quaternary structure, homodimer.

It localises to the mitochondrion. The protein resides in the cytoplasm. It catalyses the reaction (6S)-5,6,7,8-tetrahydrofolate + NADP(+) = 7,8-dihydrofolate + NADPH + H(+). The protein operates within cofactor biosynthesis; tetrahydrofolate biosynthesis; 5,6,7,8-tetrahydrofolate from 7,8-dihydrofolate: step 1/1. Functionally, key enzyme in folate metabolism. Contributes to the de novo mitochondrial thymidylate biosynthesis pathway. Catalyzes an essential reaction for de novo glycine and purine synthesis, and for DNA precursor synthesis. Binds its own mRNA. The polypeptide is Dihydrofolate reductase (DHFR) (Mesocricetus auratus (Golden hamster)).